The primary structure comprises 106 residues: MADFLGMMKQAAQLQSKMQEMQDALGNVEVEGISGGGLVVVRMTAKMDVKGVKIDPSLMKAEEREVLEDLLVTALGDARRKAEAAVQEKMQSLTGGLGLPPGLFGQ.

Belongs to the YbaB/EbfC family. As to quaternary structure, homodimer.

The protein resides in the cytoplasm. It is found in the nucleoid. Its function is as follows. Binds to DNA and alters its conformation. May be involved in regulation of gene expression, nucleoid organization and DNA protection. In Bradyrhizobium diazoefficiens (strain JCM 10833 / BCRC 13528 / IAM 13628 / NBRC 14792 / USDA 110), this protein is Nucleoid-associated protein bll8115.